Here is a 440-residue protein sequence, read N- to C-terminus: Streptokinase C (440 aa).

The signal sequence occupies residues methionine 1–alanine 26.

This protein is not a protease, but it activates plasminogen by complexing with it. As a potential virulence factor, it is thought to prevent the formation of effective fibrin barriers around the site of infection, thereby contributing to the invasiveness of the cells. The chain is Streptokinase C (skc) from Streptococcus dysgalactiae subsp. equisimilis (Streptococcus equisimilis).